We begin with the raw amino-acid sequence, 350 residues long: Arginine/serine-rich coiled-coil protein 2 (350 aa).

Disordered stretches follow at residues 1 to 146 (MIRT…FRGR) and 328 to 350 (SQTHTQRGMGLGFTSSMRGMDAV). Residues 10–24 (QARRHEVKAKSSKKH) are compositionally biased toward basic residues. A compositionally biased stretch (basic and acidic residues) spans 25–51 (RSDDTVDRDHSDKIRDRLNSSENGDEK). The segment covering 52-132 (HRRKEKRSSR…IEKPRRHSRS (81 aa)) has biased composition (basic residues). Residues 146–187 (RNAAMDAQEALARRLERAKKLQEQREKESAEKQQEIAAVAAA) are a coiled coil.

Belongs to the RSRC2 family.

The sequence is that of Arginine/serine-rich coiled-coil protein 2 (rsrc2) from Xenopus laevis (African clawed frog).